We begin with the raw amino-acid sequence, 194 residues long: 3-isopropylmalate dehydratase small subunit (194 aa).

The protein belongs to the LeuD family. LeuD type 1 subfamily. As to quaternary structure, heterodimer of LeuC and LeuD.

The catalysed reaction is (2R,3S)-3-isopropylmalate = (2S)-2-isopropylmalate. It functions in the pathway amino-acid biosynthesis; L-leucine biosynthesis; L-leucine from 3-methyl-2-oxobutanoate: step 2/4. In terms of biological role, catalyzes the isomerization between 2-isopropylmalate and 3-isopropylmalate, via the formation of 2-isopropylmaleate. In Bacillus cereus (strain ATCC 14579 / DSM 31 / CCUG 7414 / JCM 2152 / NBRC 15305 / NCIMB 9373 / NCTC 2599 / NRRL B-3711), this protein is 3-isopropylmalate dehydratase small subunit.